The chain runs to 497 residues: MADTGLLEALLQRVEQLDGGVDSQDVSAALGVDHQLVVGAVKSLQALGEVISAEQKSSKHWELTGEGREIAEQGSHEARVFNAIPAEGLPQNQLMKMASGKVGFSKAMSNKWIRLDKAHEGGPRVFRTVESIEDTVRDKLQLVQNGQSAKLEEKEKNELKKRKLLAEVTVKSYWITKGNSFSTTITKQETELTPEMIASGNWKEKKFKPYNFEAMGVAPDCGHLHPLMKVRTQFRQIFLEMGFTEMPTNNFIESSFWNFDSLFQPQQHPARDQHDTFFISDPALAHEFPRDYLERVKKVHSEGGYGSQGYKYDWKIEEAQKNLLRTHTTAVSARMLYKLAQQEKFTPVKYFSIDRVFRNETLDATHLAEFHQIEGVVADYGLTLGNLMGVLHQFFTKLGITKLRFKPAYNPYTEPSMEVFSYHEGLKKWVEVGNSGVFRPEMLLPMGLPEGVSVIAWGLSLERPTMIKYGINNIRELVGHKVNLQMVYDSPICRLDS.

L-phenylalanine-binding positions include threonine 329, 372 to 374 (QIE), and tyrosine 412. Glutamate 414 contacts Mg(2+). Phenylalanine 438 lines the L-phenylalanine pocket.

The protein belongs to the class-II aminoacyl-tRNA synthetase family. Phe-tRNA synthetase alpha subunit type 2 subfamily. As to quaternary structure, heterotetramer; dimer of two heterodimers formed by alpha and beta subunits. Requires Mg(2+) as cofactor.

Its subcellular location is the cytoplasm. The catalysed reaction is tRNA(Phe) + L-phenylalanine + ATP = L-phenylalanyl-tRNA(Phe) + AMP + diphosphate + H(+). The sequence is that of Phenylalanine--tRNA ligase alpha subunit (farsa) from Danio rerio (Zebrafish).